The chain runs to 243 residues: Probable transcriptional regulatory protein PTH_1024 (243 aa).

This sequence belongs to the TACO1 family.

The protein localises to the cytoplasm. The protein is Probable transcriptional regulatory protein PTH_1024 of Pelotomaculum thermopropionicum (strain DSM 13744 / JCM 10971 / SI).